The primary structure comprises 97 residues: MEEISLANLDTNKLEAIAQEIYVDLIEDSCLGFCFEVHRAVKCGYFYLEFADTGSVKDFGIQPVEDKGACRLPLCSLPGDPGDGPQTELQRSPPEFQ.

Positions serine 76 to glutamine 97 are disordered. Serine 92 carries the post-translational modification Phosphoserine.

This sequence belongs to the SGF11 family. Interacts strongly with ENY2. Interacts weakly with USP22.

The protein resides in the cytoplasm. Its function is as follows. By binding to ENY2, interferes with the nuclear functions of the deubiquitinase (DUB) module of the SAGA complex which consists of ENY2, ATXN7, ATXN7L3 and the histone deubiquitinating component USP22. Affects USP22 DUB activity toward histones indirectly by changing the subcellular distribution of ENY2 and altering ENY2 availability for ATXN7L3 interaction. Regulates H2B monoubiquitination (H2Bub1) levels through cytoplasmic sequestration of ENY2 resulting in loss of nuclear ENY2-ATXN7L3 association which destabilizes ATXN7L3. Affects protein expression levels of ENY2 and ATXN7L3. The polypeptide is Ataxin-7-like protein 3B (Atxn7l3b) (Mus musculus (Mouse)).